The primary structure comprises 86 residues: Beta-mammal/insect toxin To1 (86 aa).

Positions 1 to 20 (MTRFVLFISCFFLIDMIVEC) are cleaved as a signal peptide. One can recognise an LCN-type CS-alpha/beta domain in the interval 22–84 (KEGYLVGNDG…TWSSATNKCK (63 aa)). Cystine bridges form between cysteine 32–cysteine 83, cysteine 36–cysteine 58, cysteine 44–cysteine 64, and cysteine 48–cysteine 66. Lysine 84 is modified (lysine amide).

Belongs to the long (4 C-C) scorpion toxin superfamily. Sodium channel inhibitor family. Beta subfamily. As to expression, expressed by the venom gland.

It is found in the secreted. Functionally, beta toxin that show multiple effects. It enhances the open probability at more negative potentials of human Nav1.3/SCN3A and Nav1.6/SCN8A, of the insect channel BgNaV1 and of arachnid VdNaV1 channel. It promotes an important shift in slow inactivation processes as a function of the prepulse voltage in human Nav1.3/SCN3A and Nav1.6/SCN8A and a small shift in Nav1.1/SCN1A, Nav1.2/SCN2A and Nav1.4/SCN4A. Finally, it reduces the peak of sodium currents in Nav1.3/SCN3A (80% inhibition at 70 nM of toxin), Nav1.6/SCN8A (55.3%), Nav1.1/SCN1A (53.3%), Nav1.5/SCN5A (46.7%), Nav1.2/SCN2A (42.7%) and Nav1.4/SCN4A (20%) voltage-gated sodium channels. It has also been shown to affect the sodium current permeability of rat cerebellum granular cells in a partially reversible manner. In vivo, an intraperitoneal injection (20 ug) into mice produces excitability, respiratory problems, convulsions and death, within the first 30 minutes after injection. This chain is Beta-mammal/insect toxin To1, found in Tityus obscurus (Amazonian scorpion).